A 283-amino-acid polypeptide reads, in one-letter code: 2-dehydro-3-deoxyphosphooctonate aldolase (283 aa).

It belongs to the KdsA family.

Its subcellular location is the cytoplasm. The catalysed reaction is D-arabinose 5-phosphate + phosphoenolpyruvate + H2O = 3-deoxy-alpha-D-manno-2-octulosonate-8-phosphate + phosphate. Its pathway is carbohydrate biosynthesis; 3-deoxy-D-manno-octulosonate biosynthesis; 3-deoxy-D-manno-octulosonate from D-ribulose 5-phosphate: step 2/3. It functions in the pathway bacterial outer membrane biogenesis; lipopolysaccharide biosynthesis. The chain is 2-dehydro-3-deoxyphosphooctonate aldolase from Methylococcus capsulatus (strain ATCC 33009 / NCIMB 11132 / Bath).